We begin with the raw amino-acid sequence, 155 residues long: Protein-export protein SecB (155 aa).

The protein belongs to the SecB family. As to quaternary structure, homotetramer, a dimer of dimers. One homotetramer interacts with 1 SecA dimer.

It is found in the cytoplasm. Its function is as follows. One of the proteins required for the normal export of preproteins out of the cell cytoplasm. It is a molecular chaperone that binds to a subset of precursor proteins, maintaining them in a translocation-competent state. It also specifically binds to its receptor SecA. This is Protein-export protein SecB from Enterobacter sp. (strain 638).